Reading from the N-terminus, the 292-residue chain is Oxidative stress-responsive serine-rich protein 1 (292 aa).

The interval 24–178 is disordered; the sequence is ASGSVASLSV…ATQVPQASLK (155 aa). A compositionally biased stretch (basic residues) spans 65-83; the sequence is STRKSSRGAVRTQRRRRSK. 2 positions are modified to phosphothreonine: T143 and T233.

The chain is Oxidative stress-responsive serine-rich protein 1 (OSER1) from Homo sapiens (Human).